The primary structure comprises 942 residues: Protein translocase subunit SecA (942 aa).

Residues Gln-90, 108–112, and Asp-509 each bind ATP; that span reads GEGKT.

This sequence belongs to the SecA family. Monomer and homodimer. Part of the essential Sec protein translocation apparatus which comprises SecA, SecYEG and auxiliary proteins SecDF. Other proteins may also be involved.

The protein resides in the cell inner membrane. The protein localises to the cellular thylakoid membrane. Its subcellular location is the cytoplasm. It catalyses the reaction ATP + H2O + cellular proteinSide 1 = ADP + phosphate + cellular proteinSide 2.. Part of the Sec protein translocase complex. Interacts with the SecYEG preprotein conducting channel. Has a central role in coupling the hydrolysis of ATP to the transfer of proteins into and across the cell membrane, serving as an ATP-driven molecular motor driving the stepwise translocation of polypeptide chains across the membrane. Functionally, probably participates in protein translocation into and across both the cytoplasmic and thylakoid membranes in cyanobacterial cells. This chain is Protein translocase subunit SecA, found in Prochlorococcus marinus (strain NATL2A).